The chain runs to 421 residues: Imidazolonepropionase (421 aa).

The Fe(3+) site is built by His81 and His83. His81 and His83 together coordinate Zn(2+). Positions 90, 153, and 186 each coordinate 4-imidazolone-5-propanoate. Tyr153 is an N-formimidoyl-L-glutamate binding site. His251 serves as a coordination point for Fe(3+). His251 serves as a coordination point for Zn(2+). Position 254 (Glu254) interacts with 4-imidazolone-5-propanoate. Asp326 is a Fe(3+) binding site. A Zn(2+)-binding site is contributed by Asp326. Residues Asn328 and Gly330 each coordinate N-formimidoyl-L-glutamate. 4-imidazolone-5-propanoate is bound at residue Ser331.

Belongs to the metallo-dependent hydrolases superfamily. HutI family. Zn(2+) is required as a cofactor. It depends on Fe(3+) as a cofactor.

The protein localises to the cytoplasm. It carries out the reaction 4-imidazolone-5-propanoate + H2O = N-formimidoyl-L-glutamate. The protein operates within amino-acid degradation; L-histidine degradation into L-glutamate; N-formimidoyl-L-glutamate from L-histidine: step 3/3. Functionally, catalyzes the hydrolytic cleavage of the carbon-nitrogen bond in imidazolone-5-propanoate to yield N-formimidoyl-L-glutamate. It is the third step in the universal histidine degradation pathway. This chain is Imidazolonepropionase, found in Streptococcus pyogenes serotype M2 (strain MGAS10270).